Reading from the N-terminus, the 98-residue chain is Protein E7 (98 aa).

The tract at residues 1–42 (MHGRLVTLKDIVLDLQPPDPVGLHCYEQLEDSSEDEVDKVDK) is E7 terminal domain. Residues 23 to 27 (LHCYE) carry the LXCXE motif; interaction with host RB1 and TMEM173/STING motif. A zinc finger spans residues 58-94 (CCGCDSNVRLVVECTDGDIRQLQDLLLGTLNIVCPIC). A Nuclear export signal motif is present at residues 76 to 84 (IRQLQDLLL).

It belongs to the papillomaviridae E7 protein family. In terms of assembly, homodimer. Homooligomer. Interacts with host RB1; this interaction induces dissociation of RB1-E2F1 complex thereby disrupting RB1 activity. Interacts with host EP300; this interaction represses EP300 transcriptional activity. Interacts with protein E2; this interaction inhibits E7 oncogenic activity. Interacts with host TMEM173/STING; this interaction impairs the ability of TMEM173/STING to sense cytosolic DNA and promote the production of type I interferon (IFN-alpha and IFN-beta). Interacts with host ZUBR1. In terms of processing, highly phosphorylated.

It localises to the host cytoplasm. Its subcellular location is the host nucleus. Plays a role in viral genome replication by driving entry of quiescent cells into the cell cycle. Stimulation of progression from G1 to S phase allows the virus to efficiently use the cellular DNA replicating machinery to achieve viral genome replication. E7 protein has both transforming and trans-activating activities. Induces the disassembly of the E2F1 transcription factor from RB1, with subsequent transcriptional activation of E2F1-regulated S-phase genes. Interferes with host histone deacetylation mediated by HDAC1 and HDAC2, leading to transcription activation. Also plays a role in the inhibition of both antiviral and antiproliferative functions of host interferon alpha. Interaction with host TMEM173/STING impairs the ability of TMEM173/STING to sense cytosolic DNA and promote the production of type I interferon (IFN-alpha and IFN-beta). This chain is Protein E7, found in Homo sapiens (Human).